We begin with the raw amino-acid sequence, 247 residues long: Molybdate/tungstate transport system permease protein WtpB (247 aa).

The Cytoplasmic segment spans residues 1–8 (MRRDYTLY). A helical transmembrane segment spans residues 9-29 (LFAALGTFLIAYIAVPIAVIF). The Extracellular segment spans residues 30–55 (LKQASDVEMLVKTLHDPYVIEAIRNS). Residues 52-238 (IRNSLLTATA…SLSLGIFVIL (187 aa)) enclose the ABC transmembrane type-1 domain. The helical transmembrane segment at 56–76 (LLTATATALIALLFGVPLGYV) threads the bilayer. At 77–90 (LARKDFPGKSAVQA) the chain is on the cytoplasmic side. Residues 91 to 111 (LVDVPIVIPHSVVGIMLLVTF) traverse the membrane as a helical segment. At 112-114 (SNS) the chain is on the extracellular side. Residues 115–135 (ILDSYKGIVAAMLFVSAPFTI) form a helical membrane-spanning segment. Residues 136–163 (NAARDGFLAVDEKLEAVARTLGASRWRA) are Cytoplasmic-facing. A helical membrane pass occupies residues 164 to 184 (FLSISLPMAFPSIASGAIMTW). Topologically, residues 185 to 222 (ARAISEVGAILIVAYYPKTAQVLILEYFNNYGLRASRP) are extracellular. Residues 223-243 (IAVIMVSLSLGIFVILRWLVG) form a helical membrane-spanning segment. Residues 244–247 (RKNA) lie on the Cytoplasmic side of the membrane.

Belongs to the binding-protein-dependent transport system permease family. The complex is composed of two ATP-binding proteins (WtpC), two transmembrane proteins (WtpB) and a solute-binding protein (WtpA).

The protein resides in the cell membrane. Its function is as follows. Part of the ABC transporter complex WtpABC involved in molybdate/tungstate import. Probably responsible for the translocation of the substrate across the membrane. The chain is Molybdate/tungstate transport system permease protein WtpB (wtpB) from Thermococcus kodakarensis (strain ATCC BAA-918 / JCM 12380 / KOD1) (Pyrococcus kodakaraensis (strain KOD1)).